The sequence spans 368 residues: Ribosomal RNA large subunit methyltransferase M (368 aa).

Residues serine 189, cysteine 222 to glycine 225, aspartate 241, aspartate 261, and aspartate 278 contribute to the S-adenosyl-L-methionine site. Residue lysine 307 is the Proton acceptor of the active site.

The protein belongs to the class I-like SAM-binding methyltransferase superfamily. RNA methyltransferase RlmE family. RlmM subfamily. In terms of assembly, monomer.

It is found in the cytoplasm. It catalyses the reaction cytidine(2498) in 23S rRNA + S-adenosyl-L-methionine = 2'-O-methylcytidine(2498) in 23S rRNA + S-adenosyl-L-homocysteine + H(+). In terms of biological role, catalyzes the 2'-O-methylation at nucleotide C2498 in 23S rRNA. The polypeptide is Ribosomal RNA large subunit methyltransferase M (Yersinia enterocolitica serotype O:8 / biotype 1B (strain NCTC 13174 / 8081)).